A 619-amino-acid polypeptide reads, in one-letter code: Chaperone protein HscA homolog (619 aa).

The protein belongs to the heat shock protein 70 family.

In terms of biological role, chaperone involved in the maturation of iron-sulfur cluster-containing proteins. Has a low intrinsic ATPase activity which is markedly stimulated by HscB. The chain is Chaperone protein HscA homolog from Pseudomonas paraeruginosa (strain DSM 24068 / PA7) (Pseudomonas aeruginosa (strain PA7)).